A 232-amino-acid chain; its full sequence is Protein lin-7 homolog A (232 aa).

The short motif at 14–28 (MATLTVVQPLTLDRD) is the Kinase interacting site element. The region spanning 25–80 (LDRDVARAIELLEKLQESGEVPVHKLQSLKKVLQSEFCTAIREVYQYMHETITVNG) is the L27 domain. In terms of domain architecture, PDZ spans 108 to 190 (VVELPKTDEG…SVKLVVRYTP (83 aa)).

The protein belongs to the lin-7 family. In terms of assembly, forms a complex with CASK and CASKIN1. Component of the brain-specific heterotrimeric complex (LIN-10-LIN-2-LIN-7 complex) composed of at least APBA1, CASK, and LIN7, which associates with the motor protein KIF17 to transport vesicles along microtubules. Can also interact with other modular proteins containing protein-protein interaction domains like PALS1, PALS2, MPP7, DLG1, DLG2 and DLG3 through its L27 domain. Interacts with DLG4 and GRIN2B as well as CDH1 and CTNNB1, the channels KCNJ12/Kir2.2, KCNJ4/Kir2.3 and probably KCNJ2/Kir2.1 and SLC6A12/BGT-1 via its PDZ domain. The association of LIN7A with cadherin and beta-catenin is calcium-dependent, occurs at synaptic junctions and requires the actin cytoskeleton. Interacts with EGFR, ERBB2, ERBB3 and ERBB4 with both PDZ and KID domains. Associates with KIF17 via APBA1. Interacts with HTR4. Forms a tripartite complex composed of DLG1, MPP7 and LIN7 (LIN7A or LIN7C). Interacts with MARCHF11. In terms of tissue distribution, ubiquitously expressed in brain and detected in lung, liver and testis (at protein level). Expression was detected only in brain.

The protein resides in the cell membrane. The protein localises to the basolateral cell membrane. Its subcellular location is the cell junction. It localises to the postsynaptic density membrane. It is found in the tight junction. Functionally, plays a role in establishing and maintaining the asymmetric distribution of channels and receptors at the plasma membrane of polarized cells. Forms membrane-associated multiprotein complexes that may regulate delivery and recycling of proteins to the correct membrane domains. The tripartite complex composed of LIN7 (LIN7A, LIN7B or LIN7C), CASK and APBA1 associates with the motor protein KIF17 to transport vesicles containing N-methyl-D-aspartate (NMDA) receptor subunit NR2B along microtubules. This complex may have the potential to couple synaptic vesicle exocytosis to cell adhesion in brain. Ensures the proper localization of GRIN2B (subunit 2B of the NMDA receptor) to neuronal postsynaptic density and may function in localizing synaptic vesicles at synapses where it is recruited by beta-catenin and cadherin. Required to localize Kir2 channels, GABA transporter (SLC6A12) and EGFR/ERBB1, ERBB2, ERBB3 and ERBB4 to the basolateral membrane of epithelial cells. The sequence is that of Protein lin-7 homolog A (Lin7a) from Rattus norvegicus (Rat).